The chain runs to 87 residues: Olfactory receptor-like protein HbT2 (87 aa).

Residues 1–8 lie on the Cytoplasmic side of the membrane; the sequence is KLWRMTGT. The chain crosses the membrane as a helical span at residues 9–29; that stretch reads WLGGFCHSIIQIPVIIQLPFC. Residues 30–55 lie on the Extracellular side of the membrane; sequence GPNVIDHYFRDLQPLFKLACTDTFME. The chain crosses the membrane as a helical span at residues 56–76; it reads GVIVLAFSGLFSVFSFLILVS. Topologically, residues 77–87 are cytoplasmic; the sequence is SYIVILVNLRN.

This sequence belongs to the G-protein coupled receptor 1 family.

It localises to the cell membrane. Functionally, odorant receptor. The polypeptide is Olfactory receptor-like protein HbT2 (Apis mellifera ligustica (Common honeybee)).